The primary structure comprises 80 residues: Putative defensin-like protein 15 (80 aa).

Residues 1 to 29 form the signal peptide; sequence MAKFASIITFIYAALVLFAAFEVPTMVEA. Pyrrolidone carboxylic acid is present on glutamine 30. 4 disulfides stabilise this stretch: cysteine 33-cysteine 80, cysteine 44-cysteine 65, cysteine 50-cysteine 74, and cysteine 54-cysteine 76.

Belongs to the DEFL family.

The protein localises to the secreted. Confers broad-spectrum resistance to pathogens. This chain is Putative defensin-like protein 15 (PDF1.2B), found in Arabidopsis thaliana (Mouse-ear cress).